The following is a 299-amino-acid chain: Cancer/testis antigen family 47 member B1 (299 aa).

The span at 1–10 shows a compositional bias: basic and acidic residues; the sequence is MSATGDRHPT. Disordered regions lie at residues 1–102 and 215–299; these read MSAT…EGNE and AREP…SKGT. Low complexity-rich tracts occupy residues 20–31 and 46–60; these read QEGAQAEAAGAG and VPAAEVVGVAGPVEG. The segment covering 81 to 101 has biased composition (acidic residues); it reads AEEDSDIGPATEEEEEEEEGN. The segment covering 215-238 has biased composition (basic and acidic residues); that stretch reads AREPAEEAADEKPPEEAAEEKLTE. Acidic residues-rich tracts occupy residues 239-251 and 268-281; these read EATEEPAAEEPTS and WDEEAQDAAGEEEK. Residues 270 to 298 are a coiled coil; the sequence is EEAQDAAGEEEKEQEKEKDVENKVKNSKG. The segment covering 282 to 293 has biased composition (basic and acidic residues); it reads EQEKEKDVENKV.

Belongs to the CT47 family.

This is Cancer/testis antigen family 47 member B1 from Homo sapiens (Human).